The chain runs to 172 residues: MATQQVDSRRQVAAEQVAAQLLERRRGSHCDDEKQTLLALLILVLYLSTEIWGSSWEVSERIRECNYYQNLAVPQGLEYQTNEPSEEPIKTIRNWLKEKLHVFSEKLEEEVQQLEQLAWDLELWLDALLGEPHQEEHCSTYKSHLWEWAWALGREHKGGEGLLEISLSGAEL.

At 1 to 36 (MATQQVDSRRQVAAEQVAAQLLERRRGSHCDDEKQT) the chain is on the cytoplasmic side. The chain crosses the membrane as a helical; Signal-anchor for type II membrane protein span at residues 37-53 (LLALLILVLYLSTEIWG). Topologically, residues 54 to 172 (SSWEVSERIR…LEISLSGAEL (119 aa)) are extracellular. Residues 96-128 (LKEKLHVFSEKLEEEVQQLEQLAWDLELWLDAL) adopt a coiled-coil conformation.

The protein resides in the cell membrane. This is Small integral membrane protein 23 (SMIM23) from Homo sapiens (Human).